A 348-amino-acid chain; its full sequence is Selenide, water dikinase (348 aa).

The active site involves cysteine 17. ATP is bound by residues lysine 20 and 47 to 49; that span reads THD. Residue aspartate 50 coordinates Mg(2+). Residues aspartate 67, aspartate 90, and 138–140 each bind ATP; that span reads GHT. Aspartate 90 is a Mg(2+) binding site. Aspartate 226 provides a ligand contact to Mg(2+).

The protein belongs to the selenophosphate synthase 1 family. Class I subfamily. Homodimer. It depends on Mg(2+) as a cofactor.

It catalyses the reaction hydrogenselenide + ATP + H2O = selenophosphate + AMP + phosphate + 2 H(+). Synthesizes selenophosphate from selenide and ATP. This is Selenide, water dikinase from Porphyromonas gingivalis (strain ATCC 33277 / DSM 20709 / CIP 103683 / JCM 12257 / NCTC 11834 / 2561).